We begin with the raw amino-acid sequence, 1479 residues long: C-type mannose receptor 2 (1479 aa).

The N-terminal stretch at 1–30 is a signal peptide; that stretch reads MVPIRPALAPWPRHLLRCVLLLGGLRLGHP. Residues 31–1413 are Extracellular-facing; it reads ADSAAALLEP…SAALPESPVA (1383 aa). The Ricin B-type lectin domain occupies 37–190; the sequence is LLEPDVFLIF…SHGKPCTIPF (154 aa). A disulfide bridge connects residues Cys92 and Cys111. N-linked (GlcNAc...) asparagine glycans are attached at residues Asn101 and Asn139. The region spanning 181-229 is the Fibronectin type-II domain; that stretch reads SHGKPCTIPFKYDNQWFHGCTSTGREDGHLWCATTQDYGKDERWGFCPI. 4 disulfide bridges follow: Cys186–Cys212, Cys200–Cys227, Cys265–Cys358, and Cys334–Cys350. One can recognise a C-type lectin 1 domain in the interval 243 to 359; sequence LTDSCYQFNF…CSIALPYVCK (117 aa). Asn363 carries an N-linked (GlcNAc...) asparagine glycan. C-type lectin domains lie at 388–504, 527–643, 677–808, 831–950, 978–1106, 1131–1242, and 1271–1391; these read FQGH…SICK, HSPS…RYIC, KLRH…WICK, FQEA…YICK, FLNK…GFIC, YLNH…GAVC, and FREH…GVVC. 7 disulfide bridges follow: Cys409-Cys503, Cys480-Cys495, Cys617-Cys634, Cys703-Cys807, Cys784-Cys799, Cys852-Cys949, and Cys926-Cys941. N-linked (GlcNAc...) asparagine glycosylation is present at Asn1028. The cysteines at positions 1077 and 1097 are disulfide-linked. A Glycyl lysine isopeptide (Lys-Gly) (interchain with G-Cter in SUMO1) cross-link involves residue Lys1141. The cysteines at positions 1219 and 1233 are disulfide-linked. A glycan (N-linked (GlcNAc...) asparagine) is linked at Asn1348. Cys1367 and Cys1382 are joined by a disulfide. Residues 1414 to 1434 form a helical membrane-spanning segment; the sequence is LVVVLTAVLLLLALMTAALIL. Topologically, residues 1435–1479 are cytoplasmic; sequence YRRRQSAERGSFEGARYSRSSHSGPAEATEKNILVSDMEMNEQQE. A disordered region spans residues 1446–1479; it reads FEGARYSRSSHSGPAEATEKNILVSDMEMNEQQE.

In terms of assembly, interacts directly with PLAUR/UPAR and PLAU/pro-UPA to form a tri-molecular complex. Interacts with collagen V and with C-terminal region of type I collagen/COL1A1. In terms of processing, phosphorylated. In terms of tissue distribution, highly expressed in heart, lung and kidney, but little or no expression in brain, thymus or adult liver. Expressed at highly endothelialized sites such as those in choroid plexus and kidney glomerulai as well as in chondrocytes in cartilaginous regions of the embryo.

Its subcellular location is the membrane. Functionally, may play a role as endocytotic lectin receptor displaying calcium-dependent lectin activity. Internalizes glycosylated ligands from the extracellular space for release in an endosomal compartment via clathrin-mediated endocytosis. May be involved in plasminogen activation system controlling the extracellular level of PLAUR/PLAU, and thus may regulate protease activity at the cell surface. May contribute to cellular uptake, remodeling and degradation of extracellular collagen matrices. May participate in remodeling of extracellular matrix cooperating with the matrix metalloproteinases (MMPs). The chain is C-type mannose receptor 2 (Mrc2) from Mus musculus (Mouse).